A 1474-amino-acid polypeptide reads, in one-letter code: Alpha-2-macroglobulin-P (1474 aa).

The signal sequence occupies residues 1-32 (MGKRWLPSLALLPLPPPLLLLLLLLLPTNASA). A disulfide bond links Cys55 and Cys93. N-linked (GlcNAc...) asparagine glycans are attached at residues Asn62, Asn77, and Asn253. 2 disulfide bridges follow: Cys257–Cys305 and Cys275–Cys293. N-linked (GlcNAc...) asparagine glycosylation is present at Asn402. Disulfide bonds link Cys476/Cys569, Cys601/Cys771, and Cys650/Cys697. Residues 623-752 (LVYDLLPVKD…LVIVDSTGVA (130 aa)) are bait region. N-linked (GlcNAc...) asparagine glycosylation is found at Asn654 and Asn774. 5 cysteine pairs are disulfide-bonded: Cys821/Cys849, Cys847/Cys883, Cys921/Cys1321, Cys1079/Cys1127, and Cys1352/Cys1467. N-linked (GlcNAc...) asparagine glycosylation is present at Asn869. The segment at residues 972–975 (CGEQ) is a cross-link (isoglutamyl cysteine thioester (Cys-Gln)). Asn991 carries an N-linked (GlcNAc...) asparagine glycan. N-linked (GlcNAc...) asparagine glycosylation is present at Asn1366.

The protein belongs to the protease inhibitor I39 (alpha-2-macroglobulin) family. In terms of assembly, homotetramer; disulfide-linked. Expressed in uterus, mesometrial lymphoid aggregate and mammary tissue during pregnancy. Expressed in ovary, testis and kidney. Low level expression in heart. Not expressed in liver.

Its subcellular location is the secreted. Is able to inhibit all four classes of proteinases by a unique 'trapping' mechanism. This protein has a peptide stretch, called the 'bait region' which contains specific cleavage sites for different proteinases. When a proteinase cleaves the bait region, a conformational change is induced in the protein which traps the proteinase. The entrapped enzyme remains active against low molecular weight substrates (activity against high molecular weight substrates is greatly reduced). Following cleavage in the bait region a thioester bond is hydrolyzed and mediates the covalent binding of the protein to the proteinase. This chain is Alpha-2-macroglobulin-P, found in Mus musculus (Mouse).